Consider the following 616-residue polypeptide: UvrABC system protein C (616 aa).

In terms of domain architecture, GIY-YIG spans 12-97 (NDAGVYQYFD…IKQLKPKYNI (86 aa)). The 36-residue stretch at 203 to 238 (TKLISKLNEKMLQYSNDFRFEEAMTLRDRIKTIEKS) folds into the UVR domain.

The protein belongs to the UvrC family. In terms of assembly, interacts with UvrB in an incision complex.

The protein localises to the cytoplasm. The UvrABC repair system catalyzes the recognition and processing of DNA lesions. UvrC both incises the 5' and 3' sides of the lesion. The N-terminal half is responsible for the 3' incision and the C-terminal half is responsible for the 5' incision. This Aliarcobacter butzleri (strain RM4018) (Arcobacter butzleri) protein is UvrABC system protein C.